Here is a 322-residue protein sequence, read N- to C-terminus: MFARQAFRCAQPLKQGFRKYSTEAPKGKSSLAPIYAAVGITGVGVGLYRYNSATAEAPAAVDRPKVFKGGDQGWFDLKLSEIEVLNHNTKRLRFEFEDKEALSGLQVASALLTKFKPADAKAVIRPYTPTSDEETPGYIDLVVKVYPNGPMSEHLHSMNVGQRLDFKGPIVKYPWETNKHNHICLIAGGTGITPMYQLAREIFKNPEDQTKVTLVFGNVKEEDILLKKEFEELENTYPRRFRAFYVLDNPPKEWTGGKGYISKELLKTVLPEPKEENIKIFVCGPPGMYKAISGTKNSPTDQGELSGILKELGYSKEQVFKF.

Residues 31-48 traverse the membrane as a helical segment; sequence LAPIYAAVGITGVGVGLY. The FAD-binding FR-type domain maps to 72 to 176; it reads QGWFDLKLSE…KGPIVKYPWE (105 aa). An FAD-binding site is contributed by 179–214; that stretch reads KHNHICLIAGGTGITPMYQLAREIFKNPEDQTKVTL.

The protein belongs to the flavoprotein pyridine nucleotide cytochrome reductase family. The cofactor is FAD.

It is found in the mitochondrion outer membrane. It carries out the reaction 2 Fe(III)-[cytochrome b5] + NADH = 2 Fe(II)-[cytochrome b5] + NAD(+) + H(+). Functionally, may mediate the reduction of outer membrane cytochrome b5. The protein is NADH-cytochrome b5 reductase 2 (mcr1) of Aspergillus niger (strain ATCC MYA-4892 / CBS 513.88 / FGSC A1513).